The sequence spans 164 residues: UPF0178 protein RPD_2254 (164 aa).

Belongs to the UPF0178 family.

The sequence is that of UPF0178 protein RPD_2254 from Rhodopseudomonas palustris (strain BisB5).